The chain runs to 311 residues: Protein N-terminal asparagine amidohydrolase (311 aa).

As to quaternary structure, monomer.

The protein resides in the cytoplasm. The catalysed reaction is N-terminal L-asparaginyl-[protein] + H2O + H(+) = N-terminal L-aspartyl-[protein] + NH4(+). In terms of biological role, N-terminal asparagine deamidase that mediates deamidation of N-terminal asparagine residues to aspartate. Required for the ubiquitin-dependent turnover of intracellular proteins that initiate with Met-Asn. These proteins are acetylated on the retained initiator methionine and can subsequently be modified by the removal of N-acetyl methionine by acylaminoacid hydrolase (AAH). Conversion of the resulting N-terminal asparagine to aspartate by NTAN1/PNAD renders the protein susceptible to arginylation, polyubiquitination and degradation as specified by the N-end rule. This enzyme does not act on substrates with internal or C-terminal asparagines and does not act on glutamine residues in any position. The chain is Protein N-terminal asparagine amidohydrolase (NTAN1) from Sus scrofa (Pig).